Here is a 94-residue protein sequence, read N- to C-terminus: Large ribosomal subunit protein bL25 (94 aa).

The protein belongs to the bacterial ribosomal protein bL25 family. As to quaternary structure, part of the 50S ribosomal subunit; part of the 5S rRNA/L5/L18/L25 subcomplex. Contacts the 5S rRNA. Binds to the 5S rRNA independently of L5 and L18.

In terms of biological role, this is one of the proteins that binds to the 5S RNA in the ribosome where it forms part of the central protuberance. This Salmonella arizonae (strain ATCC BAA-731 / CDC346-86 / RSK2980) protein is Large ribosomal subunit protein bL25.